We begin with the raw amino-acid sequence, 272 residues long: Phosphate import ATP-binding protein PstB (272 aa).

One can recognise an ABC transporter domain in the interval 26 to 267 (LEIRNLDLRY…PKKRKTEDYI (242 aa)). 58–65 (GPSGCGKS) is a binding site for ATP.

This sequence belongs to the ABC transporter superfamily. Phosphate importer (TC 3.A.1.7) family. As to quaternary structure, the complex is composed of two ATP-binding proteins (PstB), two transmembrane proteins (PstC and PstA) and a solute-binding protein (PstS).

The protein localises to the cell inner membrane. The catalysed reaction is phosphate(out) + ATP + H2O = ADP + 2 phosphate(in) + H(+). Functionally, part of the ABC transporter complex PstSACB involved in phosphate import. Responsible for energy coupling to the transport system. In Shewanella frigidimarina (strain NCIMB 400), this protein is Phosphate import ATP-binding protein PstB.